A 90-amino-acid chain; its full sequence is Probable Fe(2+)-trafficking protein (90 aa).

It belongs to the Fe(2+)-trafficking protein family.

Its function is as follows. Could be a mediator in iron transactions between iron acquisition and iron-requiring processes, such as synthesis and/or repair of Fe-S clusters in biosynthetic enzymes. In Colwellia psychrerythraea (strain 34H / ATCC BAA-681) (Vibrio psychroerythus), this protein is Probable Fe(2+)-trafficking protein.